We begin with the raw amino-acid sequence, 409 residues long: F-box/kelch-repeat protein At2g44130 (409 aa).

One can recognise an F-box domain in the interval 17-63; sequence HELIPGLPSELALECLVRVPFQFQSAMRSVCRSWRSLLSDSSFIQER. Kelch repeat units lie at residues 98–148, 151–199, 201–248, and 251–300; these read KKSE…VLQD, KILL…SVSP, KVYV…AVGM, and RFCV…RTAG.

This chain is F-box/kelch-repeat protein At2g44130, found in Arabidopsis thaliana (Mouse-ear cress).